The chain runs to 111 residues: WAP four-disulfide core domain protein 12 (111 aa).

Positions 1 to 23 (MGSSSFLVLMVSLTLVTLVAVEG) are cleaved as a signal peptide. The WAP domain maps to 27–74 (DIEKAGVCPADNVRCFKSDPPQCHTDQDCLGERKCCYLHCGFKCVIPV). Cystine bridges form between Cys34–Cys62, Cys41–Cys66, Cys49–Cys61, and Cys55–Cys70. Residues 80 to 111 (GGNKDEDVSRPYPEPGWEAKCPGSSSTRCPQK) form a disordered region. Residues 102–111 (GSSSTRCPQK) are compositionally biased toward polar residues.

It localises to the secreted. Antibacterial protein. Putative acid-stable proteinase inhibitor. The chain is WAP four-disulfide core domain protein 12 (WFDC12) from Pan troglodytes (Chimpanzee).